We begin with the raw amino-acid sequence, 299 residues long: Sulfate adenylyltransferase subunit 2 (299 aa).

Belongs to the PAPS reductase family. CysD subfamily. As to quaternary structure, sulfate-activating enzymes, NodP and NodQ, may be physically associated.

It carries out the reaction sulfate + ATP + H(+) = adenosine 5'-phosphosulfate + diphosphate. Proposed to provide activated sulfate for transfer to nod factor. The protein is Sulfate adenylyltransferase subunit 2 (nodP) of Rhizobium tropici.